Consider the following 476-residue polypeptide: NAC domain-containing protein 86 (476 aa).

In terms of domain architecture, NAC spans 6-157 (LPPGFRFHPT…AYALCRVFKK (152 aa)). The DNA-binding element occupies 105–163 (IGTKKTLVYYRGRAPHGIRTGWVMHEYRLDESECEPSAFGMQDAYALCRVFKKIVIEAK).

In terms of tissue distribution, expressed in a few sieve element cells before enucleation and in phloem-pole pericycle cells.

It localises to the nucleus. Transcription factor directing sieve element enucleation and cytosol degradation. Not required for formation of lytic vacuoles. Regulates, with NAC045, the transcription of NEN1, NEN2, NEN3, NEN4, RTM1, RTM2, UBP16, PLDZETA, ABCB10 and At1g26450. This chain is NAC domain-containing protein 86, found in Arabidopsis thaliana (Mouse-ear cress).